The following is a 413-amino-acid chain: MQTYLVGGAVRDRLLGLPQGDRDHLVVGATVEQMLALGFSQVGRDFPVFLHPKTQQEYALARTERKQGRGYTGFVCHASPEVTLEQDLLRRDLTINAIAEDEEGRLHDPYGGIQDLEQRMLRHVSPAFAEDPLRILRVARFAARFHAQGFVVAPETLALMREMTDAGELAHLTPERVWKELEKVLLGQTPQVFFEVLRECGALKALFPELDALFGVPAPAKWHPEIDTGIHTLMVLAQACRLSPELAVRFAALCHDFGKGLTPPAFWPSHHGHGQKGLPLIRDFCERFRVPNDCRDLALLVSDLHTHIHIAFELKPATLLKVFDKADAWRRPERFAQLLDACRADFHGRTGFEERVYAEPDYVAQALGAAQAVPVKDIVAAGFKGEAIREQLAKRRFDAISRVRDEWTFIDEE.

2 residues coordinate ATP: G8 and R11. Positions 8 and 11 each coordinate CTP. Mg(2+) contacts are provided by D21 and D23. Residues R91, R137, and R140 each contribute to the ATP site. 3 residues coordinate CTP: R91, R137, and R140. Residues 228–329 form the HD domain; sequence TGIHTLMVLA…LKVFDKADAW (102 aa).

The protein belongs to the tRNA nucleotidyltransferase/poly(A) polymerase family. Bacterial CCA-adding enzyme type 1 subfamily. Monomer. Can also form homodimers and oligomers. Mg(2+) serves as cofactor. The cofactor is Ni(2+).

It carries out the reaction a tRNA precursor + 2 CTP + ATP = a tRNA with a 3' CCA end + 3 diphosphate. The catalysed reaction is a tRNA with a 3' CCA end + 2 CTP + ATP = a tRNA with a 3' CCACCA end + 3 diphosphate. Catalyzes the addition and repair of the essential 3'-terminal CCA sequence in tRNAs without using a nucleic acid template. Adds these three nucleotides in the order of C, C, and A to the tRNA nucleotide-73, using CTP and ATP as substrates and producing inorganic pyrophosphate. tRNA 3'-terminal CCA addition is required both for tRNA processing and repair. Also involved in tRNA surveillance by mediating tandem CCA addition to generate a CCACCA at the 3' terminus of unstable tRNAs. While stable tRNAs receive only 3'-terminal CCA, unstable tRNAs are marked with CCACCA and rapidly degraded. This is Multifunctional CCA protein from Aeromonas salmonicida (strain A449).